The primary structure comprises 493 residues: Phenmedipham hydrolase (493 aa).

Catalysis depends on Ser-188, which acts as the Acyl-ester intermediate. Catalysis depends on charge relay system residues Glu-307 and His-402.

It belongs to the type-B carboxylesterase/lipase family. As to quaternary structure, monomer.

Functionally, may degrade the phenylcarbamate herbicides phenmedipham and desmedipham cometabolically by hydrolyzing their central carbamate linkages. Conveys resistance to the herbicide phenmedipham. This Pseudarthrobacter oxydans (Arthrobacter oxydans) protein is Phenmedipham hydrolase (pcd).